Here is a 409-residue protein sequence, read N- to C-terminus: NDP-glycosyltransferase ltbB (409 aa).

N-linked (GlcNAc...) asparagine glycosylation occurs at N36. The helical transmembrane segment at 319–339 (IWAFAYVWAWLQTLYTAPWIA) threads the bilayer.

Belongs to the GT2 glycosyltransferase family.

Its subcellular location is the membrane. The protein operates within secondary metabolite biosynthesis. In terms of biological role, NDP-glycosyltransferase; part of the gene cluster that mediates the biosynthesis of luteodienoside A, a glycosylated polyketide consisting of an unusual 1-O-beta-D-glucopyranosyl-myo-inositol (glucinol) ester of 3-hydroxy-2,2,4-trimethylocta-4,6-dienoic acid. LtbB likely serves as a glucinol synthase by transferring D-glucose to myo-inositol using NDP-glucose as a substrate. The ltbA carnitine O-acyltransferase (cAT) domain uses glucinol produced by the glycosyltransferase ltbB as an offloading substrate to release luteodienoside A from the HR-PKS. Since ltbA and ltbB are sufficient for the biosynthesis of luteodienoside A, the functions of the methyltransferase ltbC and the FAD-binding monooxygenase ltbD within the pathway remain obscur. The chain is NDP-glycosyltransferase ltbB from Aspergillus luteorubrus.